We begin with the raw amino-acid sequence, 597 residues long: Replication protein E1 (597 aa).

The Nuclear localization signal signature appears at 75–77 (KRK). Phosphoserine; by host is present on residues serine 81, serine 91, and serine 104. The Nuclear export signal signature appears at 90–99 (LSPQLASISL). Residues 119–141 (QSSNEADDSLEGQRQVEPLPGRE) form a disordered region. The segment at 137-300 (LPGREENGAD…TLITHHLAAE (164 aa)) is DNA-binding region. Residues 400–550 (IEFILFLADF…FPLDDNGNPG (151 aa)) form the SF3 helicase domain. 426-433 (GPPNTGKS) contacts ATP. Lysine 507 participates in a covalent cross-link: Glycyl lysine isopeptide (Lys-Gly) (interchain with G-Cter in SUMO). Residues 574-597 (PEDGEDGETQRGLRLTARGTTESV) form a disordered region.

It belongs to the papillomaviridae E1 protein family. In terms of assembly, can form hexamers. Interacts with E2 protein; this interaction increases E1 DNA binding specificity. Interacts with host DNA polymerase subunit POLA2. Interacts with host single stranded DNA-binding protein RPA1. Interacts with host TOP1; this interaction stimulates the enzymatic activity of TOP1. In terms of processing, phosphorylated. Sumoylated.

It is found in the host nucleus. It carries out the reaction Couples ATP hydrolysis with the unwinding of duplex DNA by translocating in the 3'-5' direction.. The enzyme catalyses ATP + H2O = ADP + phosphate + H(+). Functionally, ATP-dependent DNA 3'-5' helicase required for initiation of viral DNA replication. It forms a complex with the viral E2 protein. The E1-E2 complex binds to the replication origin which contains binding sites for both proteins. During the initial step, a dimer of E1 interacts with a dimer of protein E2 leading to a complex that binds the viral origin of replication with high specificity. Then, a second dimer of E1 displaces the E2 dimer in an ATP-dependent manner to form the E1 tetramer. Following this, two E1 monomers are added to each half of the site, which results in the formation of two E1 trimers on the viral ori. Subsequently, two hexamers will be created. The double hexamer acts as a bi-directional helicase machinery and unwinds the viral DNA and then recruits the host DNA polymerase to start replication. This Canis lupus familiaris (Dog) protein is Replication protein E1.